The chain runs to 109 residues: uncharacterized protein (109 aa).

A helical transmembrane segment spans residues 87 to 106 (WCSVGTAAAVGIFIGALLSM).

The protein belongs to the ElaB/YgaM/YqjD family. In terms of assembly, may bind to ribosomes.

The protein localises to the cell inner membrane. This is an uncharacterized protein from Escherichia coli O157:H7.